Consider the following 308-residue polypeptide: Zinc finger CCCH domain-containing protein 15 (308 aa).

The disordered stretch occupies residues 1–21; the sequence is MENKIAPFSYSGSSAGNSSSG. Positions 9-21 are enriched in low complexity; the sequence is SYSGSSAGNSSSG. Positions 56 to 91 form a coiled coil; it reads TRLHEASLEAEALRLENTELRSMNLRLKNELNSLIR. A disordered region spans residues 110–190; that stretch reads LSIGGNDADE…GTVTKPGTCG (81 aa). Phosphoserine is present on Ser-111. Positions 148–164 are enriched in polar residues; the sequence is RSSLPKSISVRSNGYSK. 2 consecutive C3H1-type zinc fingers follow at residues 222-250 and 260-288; these read MTKT…HGIK and RYKT…HSLS.

In terms of processing, phosphorylated at Ser-111 by ASK7/BIN2 in the cytoplasm in the absence of brassinosteroids (BRs). Highly expressed in secondary cell wall-forming tissues and the xylem cells of roots. Expressed predominantly in inflorescence stems, flowers and siliques. Highly expressed in the basal portion of stems, where cells are undergoing secondary cell wall thickening. Highly expressed in meiocytes and tapetum from anthers.

The protein localises to the cytoplasm. It localises to the nucleus. Functions probably as a transcriptional factor that activates genes involved in secondary cell wall biosynthesis. Functions redudantly with C3H14 to regulate secondary cell wall formation. C3H14 and C3H15 have overlapping roles in the regulation of secondary cell wall formation and anther development. C3H14 may contribute more to secondary cell wall thickening while C3H15 could be more important in anther development. May regulate at both the transcriptional and post-transcriptional levels the expression of many genes involved in various biological processes, particularly those associated with cell wall metabolism and pollen development. Involved in the regulation of callose metabolism in male meiocytes, in integrity of newly formed microspores, and promotes male fertility. May be involved in the regulation of the callose synthesis genes CALS5 and CALS12, the potential degradation of callose walls-related genes A6 and MYB80, as well as other putative beta-1,3-glucanase genes. Negatively regulates cell elongation by inhibiting brassinosteroid (BR) signaling. Functions downstream of the BRI1 receptor as a negative regulator in the BR pathway. In Arabidopsis thaliana (Mouse-ear cress), this protein is Zinc finger CCCH domain-containing protein 15.